The chain runs to 282 residues: Pantothenate synthetase (282 aa).

30–37 (MGYFHEGH) contributes to the ATP binding site. The active-site Proton donor is the H37. Q61 lines the (R)-pantoate pocket. Q61 is a binding site for beta-alanine. 147–150 (GQKD) contacts ATP. A (R)-pantoate-binding site is contributed by Q153. ATP-binding positions include V176 and 184-187 (LSSR).

Belongs to the pantothenate synthetase family. In terms of assembly, homodimer.

Its subcellular location is the cytoplasm. It catalyses the reaction (R)-pantoate + beta-alanine + ATP = (R)-pantothenate + AMP + diphosphate + H(+). The protein operates within cofactor biosynthesis; (R)-pantothenate biosynthesis; (R)-pantothenate from (R)-pantoate and beta-alanine: step 1/1. Functionally, catalyzes the condensation of pantoate with beta-alanine in an ATP-dependent reaction via a pantoyl-adenylate intermediate. The chain is Pantothenate synthetase from Maridesulfovibrio salexigens (strain ATCC 14822 / DSM 2638 / NCIMB 8403 / VKM B-1763) (Desulfovibrio salexigens).